Reading from the N-terminus, the 273-residue chain is Bifunctional protein FolD (273 aa).

NADP(+) is bound by residues 155 to 157, Ser-182, and Ile-223; that span reads GRS.

This sequence belongs to the tetrahydrofolate dehydrogenase/cyclohydrolase family. Homodimer.

The catalysed reaction is (6R)-5,10-methylene-5,6,7,8-tetrahydrofolate + NADP(+) = (6R)-5,10-methenyltetrahydrofolate + NADPH. It catalyses the reaction (6R)-5,10-methenyltetrahydrofolate + H2O = (6R)-10-formyltetrahydrofolate + H(+). Its pathway is one-carbon metabolism; tetrahydrofolate interconversion. Functionally, catalyzes the oxidation of 5,10-methylenetetrahydrofolate to 5,10-methenyltetrahydrofolate and then the hydrolysis of 5,10-methenyltetrahydrofolate to 10-formyltetrahydrofolate. In Pseudothermotoga lettingae (strain ATCC BAA-301 / DSM 14385 / NBRC 107922 / TMO) (Thermotoga lettingae), this protein is Bifunctional protein FolD.